A 192-amino-acid chain; its full sequence is Erythropoietin (192 aa).

Residues 1–26 (MGVPDCLALPLLVTFLLLSLGLPVLG) form the signal peptide. Residues cysteine 33 and cysteine 187 are joined by a disulfide bond. 3 N-linked (GlcNAc...) asparagine glycosylation sites follow: asparagine 50, asparagine 64, and asparagine 109.

Belongs to the EPO/TPO family.

Its subcellular location is the secreted. Functionally, hormone involved in the regulation of erythrocyte proliferation and differentiation and the maintenance of a physiological level of circulating erythrocyte mass. Binds to EPOR leading to EPOR dimerization and JAK2 activation thereby activating specific downstream effectors, including STAT1 and STAT3. In Nannospalax galili (Northern Israeli blind subterranean mole rat), this protein is Erythropoietin (EPO).